The primary structure comprises 233 residues: MNIDIIISADDIKEEKIKDKSIVVIDILRATSVIITALNNGCKEVVPVVEIEEALEKVKNNRKNYILGGERKALKIEGFDCSNSPLEYKSELVKGKTLVITTSNGTRAIKEALLAKDILIGALINGKAVAEKLISLKNDVVIINAGTYGEFSIDDFICSGYIIDCIAKDMEVKLSDISKVAKYLYNMNTNMEFIKEAKHFKRIMELGLFMDLEYCCKKDIVSIVPQYKNGIIK.

Belongs to the ComB family. It depends on Mg(2+) as a cofactor.

The catalysed reaction is (2R)-O-phospho-3-sulfolactate + H2O = (2R)-3-sulfolactate + phosphate. In Clostridium tetani (strain Massachusetts / E88), this protein is Probable 2-phosphosulfolactate phosphatase.